The sequence spans 273 residues: SET domain-containing protein 9 (273 aa).

Residues F96–Y269 form the SET domain. Y268 provides a ligand contact to S-adenosyl-L-methionine.

The protein belongs to the class V-like SAM-binding methyltransferase superfamily.

The protein is SET domain-containing protein 9 (SETD9) of Pongo abelii (Sumatran orangutan).